We begin with the raw amino-acid sequence, 415 residues long: Glutamate-1-semialdehyde 2,1-aminomutase (415 aa).

K260 is subject to N6-(pyridoxal phosphate)lysine.

The protein belongs to the class-III pyridoxal-phosphate-dependent aminotransferase family. HemL subfamily. Requires pyridoxal 5'-phosphate as cofactor.

It is found in the cytoplasm. The catalysed reaction is (S)-4-amino-5-oxopentanoate = 5-aminolevulinate. It participates in porphyrin-containing compound metabolism; protoporphyrin-IX biosynthesis; 5-aminolevulinate from L-glutamyl-tRNA(Glu): step 2/2. The chain is Glutamate-1-semialdehyde 2,1-aminomutase from Methanoculleus marisnigri (strain ATCC 35101 / DSM 1498 / JR1).